Reading from the N-terminus, the 128-residue chain is Ribosome-binding factor A (128 aa).

The protein belongs to the RbfA family. As to quaternary structure, monomer. Binds 30S ribosomal subunits, but not 50S ribosomal subunits or 70S ribosomes.

The protein resides in the cytoplasm. Its function is as follows. One of several proteins that assist in the late maturation steps of the functional core of the 30S ribosomal subunit. Associates with free 30S ribosomal subunits (but not with 30S subunits that are part of 70S ribosomes or polysomes). Required for efficient processing of 16S rRNA. May interact with the 5'-terminal helix region of 16S rRNA. The protein is Ribosome-binding factor A of Acidithiobacillus ferrooxidans (strain ATCC 23270 / DSM 14882 / CIP 104768 / NCIMB 8455) (Ferrobacillus ferrooxidans (strain ATCC 23270)).